We begin with the raw amino-acid sequence, 59 residues long: Large ribosomal subunit protein uL30 (59 aa).

Belongs to the universal ribosomal protein uL30 family. In terms of assembly, part of the 50S ribosomal subunit.

This chain is Large ribosomal subunit protein uL30, found in Haemophilus influenzae (strain 86-028NP).